Consider the following 204-residue polypeptide: N-(5'-phosphoribosyl)anthranilate isomerase (204 aa).

Belongs to the TrpF family.

It carries out the reaction N-(5-phospho-beta-D-ribosyl)anthranilate = 1-(2-carboxyphenylamino)-1-deoxy-D-ribulose 5-phosphate. It functions in the pathway amino-acid biosynthesis; L-tryptophan biosynthesis; L-tryptophan from chorismate: step 3/5. This is N-(5'-phosphoribosyl)anthranilate isomerase from Bacillus mycoides (strain KBAB4) (Bacillus weihenstephanensis).